The primary structure comprises 253 residues: 3-deoxy-manno-octulosonate cytidylyltransferase (253 aa).

The protein belongs to the KdsB family.

Its subcellular location is the cytoplasm. It carries out the reaction 3-deoxy-alpha-D-manno-oct-2-ulosonate + CTP = CMP-3-deoxy-beta-D-manno-octulosonate + diphosphate. It functions in the pathway nucleotide-sugar biosynthesis; CMP-3-deoxy-D-manno-octulosonate biosynthesis; CMP-3-deoxy-D-manno-octulosonate from 3-deoxy-D-manno-octulosonate and CTP: step 1/1. It participates in bacterial outer membrane biogenesis; lipopolysaccharide biosynthesis. Its function is as follows. Activates KDO (a required 8-carbon sugar) for incorporation into bacterial lipopolysaccharide in Gram-negative bacteria. The protein is 3-deoxy-manno-octulosonate cytidylyltransferase of Idiomarina loihiensis (strain ATCC BAA-735 / DSM 15497 / L2-TR).